We begin with the raw amino-acid sequence, 933 residues long: Progesterone receptor (933 aa).

Positions 1 to 164 (MTELKAKGPR…PATQGVLSPL (164 aa)) are AF3; mediates transcriptional activation. Residues 1–256 (MTELKAKGPR…AAAGGGAAAV (256 aa)) form a disordered region. The segment at 1–566 (MTELKAKGPR…YSFESLPQKI (566 aa)) is modulating, Pro-Rich. A Phosphoserine modification is found at serine 20. The short motif at 55-59 (LDGLL) is the LXXL motif 1 element. Serine 81 carries the post-translational modification Phosphoserine. The short motif at 115–119 (LDTLL) is the LXXL motif 2 element. Residues serine 130 and serine 162 each carry the phosphoserine modification. Positions 165–305 (MSRSGCKAGD…LATTMMDFIH (141 aa)) are mediates transcriptional transrepression. The Nuclear localization signal motif lies at 183–187 (KVLPR). Phosphoserine occurs at positions 190 and 213. Residues 220–231 (EVEEEDGSESEE) are compositionally biased toward acidic residues. Positions 232–246 (SAGPLLKGKPRALGG) are enriched in low complexity. A Phosphoserine; by MAPK1 modification is found at serine 294. The segment covering 335–356 (AXSAFAPPRSSPSASSTPVAVG) has biased composition (low complexity). A disordered region spans residues 335–378 (AXSAFAPPRSSPSASSTPVAVGDFPDCAYPPDAEPKDDAYPLYS). Serine 345 bears the Phosphoserine; by MAPK mark. Lysine 388 participates in a covalent cross-link: Glycyl lysine isopeptide (Lys-Gly) (interchain with G-Cter in SUMO); alternate. Lysine 388 participates in a covalent cross-link: Glycyl lysine isopeptide (Lys-Gly) (interchain with G-Cter in ubiquitin); alternate. A Phosphoserine; by CDK2 modification is found at serine 400. A disordered region spans residues 415 to 452 (PDFPLGPPPPLPPRAPPSRPGEAAVTAAPASASVSSAS). Residues 418–433 (PLGPPPPLPPRAPPSR) show a composition bias toward pro residues. A compositionally biased stretch (low complexity) spans 434–452 (PGEAAVTAAPASASVSSAS). The segment at 456-546 (STLECILYKA…VYPPYLNYLR (91 aa)) is AF1; mediates transcriptional activation. Lysine 531 is covalently cross-linked (Glycyl lysine isopeptide (Lys-Gly) (interchain with G-Cter in SUMO)). 2 NR C4-type zinc fingers span residues 567 to 587 (CLICGDEASGCHYGVLTCGSC) and 603 to 627 (CAGRNDCIVDKIRRKNCPACRLRKC). Positions 567–639 (CLICGDEASG…AGMVLGGRKF (73 aa)) form a DNA-binding region, nuclear receptor. At serine 676 the chain carries Phosphoserine. The 235-residue stretch at 679-913 (QDIQLIPPLI…EFPEMMSEVI (235 aa)) folds into the NR LBD domain. The tract at residues 687–933 (LINLLMSIEP…MVKPLLFHKK (247 aa)) is AF2; mediates transcriptional activation. Arginine 766 is a progesterone binding site.

It belongs to the nuclear hormone receptor family. In terms of assembly, interacts with SMARD1 and UNC45A. Interacts with CUEDC2; the interaction promotes ubiquitination, decreases sumoylation, and represses transcriptional activity. Interacts with PIAS3; the interaction promotes sumoylation of PR in a hormone-dependent manner, inhibits DNA-binding, and alters nuclear export. Interacts with SP1; the interaction requires ligand-induced phosphorylation on Ser-345 by ERK1/2-MAPK. Interacts with PRMT2. Interacts with NCOA2 and NCOA1. Interacts with KLF9. Interacts with GTF2B. Post-translationally, phosphorylated on multiple serine sites. Several of these sites are hormone-dependent. Phosphorylation on Ser-294 is highly hormone-dependent and modulates ubiquitination and sumoylation on Lys-388. Phosphorylation on Ser-102 and Ser-345 requires induction by hormone. Basal phosphorylation on Ser-81, Ser-162, Ser-190 and Ser-400 is increased in response to progesterone and can be phosphorylated in vitro by the CDK2-A1 complex. Increased levels of phosphorylation on Ser-400 also in the presence of EGF, heregulin, IGF, PMA and FBS. Phosphorylation at this site by CDK2 is ligand-independent, and increases nuclear translocation and transcriptional activity. Phosphorylation at Ser-162 and Ser-294, but not at Ser-190, is impaired during the G(2)/M phase of the cell cycle. Phosphorylation on Ser-345 by ERK1/2 MAPK is required for interaction with SP1. In terms of processing, sumoylation is hormone-dependent and represses transcriptional activity. Sumoylation on all three sites is enhanced by PIAS3. Desumoylated by SENP1. Sumoylation on Lys-388, the main site of sumoylation, is repressed by ubiquitination on the same site, and modulated by phosphorylation at Ser-294. Ubiquitination is hormone-dependent and represses sumoylation on the same site. Promoted by MAPK-mediated phosphorylation on Ser-294. Ubiquitinated by UBR5, leading to its degradation: UBR5 specifically recognizes and binds ligand-bound PGR when it is not associated with coactivators (NCOAs). In presence of NCOAs, the UBR5-degron is not accessible, preventing its ubiquitination and degradation. Post-translationally, palmitoylated by ZDHHC7 and ZDHHC21. Palmitoylation is required for plasma membrane targeting and for rapid intracellular signaling via ERK and AKT kinases and cAMP generation.

It localises to the nucleus. Its subcellular location is the cytoplasm. Functionally, the steroid hormones and their receptors are involved in the regulation of eukaryotic gene expression and affect cellular proliferation and differentiation in target tissues. Transcriptional activator of several progesteron-dependent promoters in a variety of cell types. Involved in activation of SRC-dependent MAPK signaling on hormone stimulation. The sequence is that of Progesterone receptor (PGR) from Pan troglodytes (Chimpanzee).